The primary structure comprises 337 residues: Heat-inducible transcription repressor HrcA (337 aa).

Belongs to the HrcA family.

Functionally, negative regulator of class I heat shock genes (grpE-dnaK-dnaJ and groELS operons). Prevents heat-shock induction of these operons. This is Heat-inducible transcription repressor HrcA from Nocardioides sp. (strain ATCC BAA-499 / JS614).